The primary structure comprises 365 residues: Membrane-bound lytic murein transglycosylase A (365 aa).

The signal sequence occupies residues 1–20 (MKGRWVKYLLMGTVVAMLAA). Cys-21 carries N-palmitoyl cysteine lipidation. Cys-21 carries S-diacylglycerol cysteine lipidation.

Its subcellular location is the cell outer membrane. The catalysed reaction is Exolytic cleavage of the (1-&gt;4)-beta-glycosidic linkage between N-acetylmuramic acid (MurNAc) and N-acetylglucosamine (GlcNAc) residues in peptidoglycan, from either the reducing or the non-reducing ends of the peptidoglycan chains, with concomitant formation of a 1,6-anhydrobond in the MurNAc residue.. Functionally, murein-degrading enzyme. May play a role in recycling of muropeptides during cell elongation and/or cell division. Degrades murein glycan strands and insoluble, high-molecular weight murein sacculi. The polypeptide is Membrane-bound lytic murein transglycosylase A (mltA) (Escherichia coli O157:H7).